The chain runs to 258 residues: Imidazole glycerol phosphate synthase subunit HisF (258 aa).

Residues D12 and D131 contribute to the active site.

Belongs to the HisA/HisF family. In terms of assembly, heterodimer of HisH and HisF.

The protein localises to the cytoplasm. It catalyses the reaction 5-[(5-phospho-1-deoxy-D-ribulos-1-ylimino)methylamino]-1-(5-phospho-beta-D-ribosyl)imidazole-4-carboxamide + L-glutamine = D-erythro-1-(imidazol-4-yl)glycerol 3-phosphate + 5-amino-1-(5-phospho-beta-D-ribosyl)imidazole-4-carboxamide + L-glutamate + H(+). The protein operates within amino-acid biosynthesis; L-histidine biosynthesis; L-histidine from 5-phospho-alpha-D-ribose 1-diphosphate: step 5/9. Functionally, IGPS catalyzes the conversion of PRFAR and glutamine to IGP, AICAR and glutamate. The HisF subunit catalyzes the cyclization activity that produces IGP and AICAR from PRFAR using the ammonia provided by the HisH subunit. This Sinorhizobium medicae (strain WSM419) (Ensifer medicae) protein is Imidazole glycerol phosphate synthase subunit HisF.